The primary structure comprises 579 residues: uncharacterized protein (579 aa).

Positions 449 to 577 constitute a GGDEF domain; it reads QKGVFILVDI…GKNRLMIHDS (129 aa).

This is an uncharacterized protein from Bacillus subtilis (strain 168).